Here is a 900-residue protein sequence, read N- to C-terminus: Aldos-2-ulose dehydratase (900 aa).

Residues 1-433 (MYSKVFLKPH…NPSINVFLST (433 aa)) form a dehydratase domain region. Residue Tyr-35 participates in ascopyrone M binding. Mg(2+) contacts are provided by Asp-101, Thr-103, Asn-105, Phe-107, and Asp-109. Ascopyrone M is bound by residues Tyr-116, Met-120, His-155, His-215, His-295, and His-337. The Proton acceptor role is filled by His-155. The Zn(2+) site is built by His-215, His-295, His-337, Asp-343, Asp-345, Asp-347, Glu-349, and Glu-351. Ascopyrone M contacts are provided by Tyr-414, Tyr-419, and Ala-627. Residues 434-739 (GILAERLDEE…EFPGFETFST (306 aa)) form an isomerase domain region. 1,5-anhydro-D-fructose is bound by residues Ala-627 and His-630. Zn(2+)-binding residues include His-630, His-632, and Glu-639. Residues Glu-639 and His-641 each contribute to the ascopyrone M site. His-641 contacts 1,5-anhydro-D-fructose. Zn(2+) is bound at residue His-709. Trp-726 serves as a coordination point for ascopyrone M. Trp-726 provides a ligand contact to 1,5-anhydro-D-fructose.

In terms of assembly, homodimer. Zn(2+) is required as a cofactor.

It catalyses the reaction 1,5-anhydro-D-fructose = microthecin + H2O. The catalysed reaction is 1,5-anhydro-D-fructose = ascopyrone M + H2O. It carries out the reaction ascopyrone M = microthecin. The enzyme catalyses 2-dehydro-D-glucose = cortalcerone + H2O. It participates in carbohydrate metabolism; 1,5-anhydro-D-fructose degradation. A bifunctional enzyme which catalyzes the dehydration of anhydrofructose into ascopyrone M, and the isomerization of ascopyrone M into microthecin. To a lesser extent, can also act on 2-dehydro-D-glucopyranose (D-glucosone), leading to the antibiotic cortalcerone. This chain is Aldos-2-ulose dehydratase, found in Phanerodontia chrysosporium (White-rot fungus).